The sequence spans 417 residues: Cysteate synthase (417 aa).

Residue K104 is modified to N6-(pyridoxal phosphate)lysine. Positions 131 and 371 each coordinate pyridoxal 5'-phosphate.

This sequence belongs to the threonine synthase family. Cysteate synthase subfamily. In terms of assembly, homotrimer. Pyridoxal 5'-phosphate is required as a cofactor.

It carries out the reaction O-phospho-L-serine + sulfite + H(+) = L-cysteate + phosphate. The protein operates within cofactor biosynthesis; coenzyme M biosynthesis. Specifically catalyzes the beta-elimination of phosphate from L-phosphoserine and the beta-addition of sulfite to the dehydroalanine intermediate to produce L-cysteate. This Methanococcoides burtonii (strain DSM 6242 / NBRC 107633 / OCM 468 / ACE-M) protein is Cysteate synthase.